A 495-amino-acid polypeptide reads, in one-letter code: Glycerol kinase (495 aa).

ADP is bound at residue Thr-11. ATP-binding residues include Thr-11, Thr-12, and Ser-13. Thr-11 is a binding site for sn-glycerol 3-phosphate. ADP is bound at residue Arg-15. Sn-glycerol 3-phosphate is bound by residues Arg-81, Glu-82, Tyr-133, and Asp-242. Glycerol contacts are provided by Arg-81, Glu-82, Tyr-133, Asp-242, and Gln-243. ADP is bound by residues Thr-264 and Gly-307. ATP contacts are provided by Thr-264, Gly-307, Gln-311, and Gly-408. Gly-408 lines the ADP pocket.

This sequence belongs to the FGGY kinase family.

It catalyses the reaction glycerol + ATP = sn-glycerol 3-phosphate + ADP + H(+). The protein operates within polyol metabolism; glycerol degradation via glycerol kinase pathway; sn-glycerol 3-phosphate from glycerol: step 1/1. Inhibited by fructose 1,6-bisphosphate (FBP). Functionally, key enzyme in the regulation of glycerol uptake and metabolism. Catalyzes the phosphorylation of glycerol to yield sn-glycerol 3-phosphate. The protein is Glycerol kinase of Geobacter sp. (strain M21).